Consider the following 469-residue polypeptide: Zinc finger CCCH domain-containing protein 30 (469 aa).

The segment at 415 to 443 (VRPMKPCAYFNSPKGCRNGASCTFLHDAS) adopts a C3H1-type zinc-finger fold. Residues 444–469 (APTRKDHQKQKGSKRIKLDNTMGGRN) are disordered. Basic residues predominate over residues 449-458 (DHQKQKGSKR).

This is Zinc finger CCCH domain-containing protein 30 from Oryza sativa subsp. japonica (Rice).